Consider the following 468-residue polypeptide: MLPAALTSLLGPFLLAWVLPLARGQTPNYTRPVFLCGGDVTGESGYVASEGFPNLYPPNKKCIWTITVPEGQTVSLSFRVFDMELHPSCRYDALEVFAGSGTSGQRLGRFCGTFRPAPVVAPGNQVTLRMTTDEGTGGRGFLLWYSGRATSGTEHQFCGGRMEKAQGTLTTPNWPESDYPPGISCSWHIIAPSNQVIMLTFGKFDVEPDTYCRYDSVSVFNGAVSDDSKRLGKFCGDKAPSPISSEGNELLVQFVSDLSVTADGFSASYRTLPRDAVEKESAPSPGEDAQHGPQSRSDPKTGTGPKVKPPSKPKVQPVEKPEGSPATQATPVAPDAPSITCPKQYKRSGTLQSNFCSSSLVVTGTVKAMVRGPGEGLTVTVSLLGVYKTGDLDLPSPASGTSLKFYVPCKQMPPMKKGASYLLMGQVEENRGPILPPESFVVLYRPNQDQILSNLSKRKCPSQPRPDA.

Residues 1 to 24 (MLPAALTSLLGPFLLAWVLPLARG) form the signal peptide. A glycan (N-linked (GlcNAc...) asparagine) is linked at N28. 4 cysteine pairs are disulfide-bonded: C36–C62, C89–C111, C158–C185, and C212–C235. CUB domains lie at 36-148 (CGGD…YSGR) and 158-272 (CGGR…YRTL). A Phosphothreonine modification is found at T41. S49 carries the post-translational modification Phosphoserine. Residues 271-341 (TLPRDAVEKE…VAPDAPSITC (71 aa)) form a disordered region. A compositionally biased stretch (basic and acidic residues) spans 272–281 (LPRDAVEKES). 2 cysteine pairs are disulfide-bonded: C341/C409 and C356/C460. Residues 341–460 (CPKQYKRSGT…ILSNLSKRKC (120 aa)) form the NTR domain. N454 carries an N-linked (GlcNAc...) asparagine glycan.

As to quaternary structure, interacts with EFEMP2. In terms of tissue distribution, expressed at highest levels in collagen-rich tissues, especially tendon. Also expressed in cornea and sterna.

It is found in the secreted. Its function is as follows. Binds to the C-terminal propeptide of type I procollagen and enhances procollagen C-proteinase activity. The sequence is that of Procollagen C-endopeptidase enhancer 1 (Pcolce) from Rattus norvegicus (Rat).